We begin with the raw amino-acid sequence, 81 residues long: MAKKIGIEQSLSDVEAALKEKGYDVVMMKSPADAQGCDCCVVTGLDNNVQGIADTVTQAPVITASGMTAEEICSEVESRIQ.

It belongs to the UPF0180 family.

The sequence is that of UPF0180 protein YkuS (ykuS) from Bacillus subtilis (strain 168).